Consider the following 293-residue polypeptide: Glycine N-methyltransferase (293 aa).

Valine 2 carries the N-acetylvaline modification. Serine 4 and tyrosine 6 together coordinate (6S)-5-methyl-5,6,7,8-tetrahydrofolate. Residue serine 10 is modified to Phosphoserine. S-adenosyl-L-methionine-binding residues include tyrosine 22, tryptophan 31, tyrosine 34, and arginine 41. At tyrosine 34 the chain carries Phosphotyrosine. An N6-succinyllysine modification is found at lysine 46. S-adenosyl-L-methionine is bound by residues alanine 65, 86–88 (DAS), 117–118 (NW), 137–140 (LGNS), and arginine 176. Lysine 191, lysine 196, and lysine 201 each carry N6-succinyllysine. Residue histidine 215 coordinates (6S)-5-methyl-5,6,7,8-tetrahydrofolate. Tyrosine 221 contacts S-adenosyl-L-methionine. A (6S)-5-methyl-5,6,7,8-tetrahydrofolate-binding site is contributed by arginine 240.

The protein belongs to the class I-like SAM-binding methyltransferase superfamily. Glycine N-methyltransferase family. In terms of assembly, homotetramer. In terms of tissue distribution, abundant in liver.

Its subcellular location is the cytoplasm. It carries out the reaction glycine + S-adenosyl-L-methionine = sarcosine + S-adenosyl-L-homocysteine + H(+). Inhibited by 5-methyltetrahydrofolate monoglutamate and by 5-methyltetrahydrofolate pentaglutamate, inhibition is much more effective by the pentaglutamate form than by the monoglutamate form. Two molecules of 5-methyltetrahydrofolate are bound per tetramer. The binding sites are localized between subunits. Inhibitor binding may preclude movements of the polypeptide chain that are necessary for enzyme activity. Functionally, catalyzes the methylation of glycine by using S-adenosylmethionine (AdoMet) to form N-methylglycine (sarcosine) with the concomitant production of S-adenosylhomocysteine (AdoHcy), a reaction regulated by the binding of 5-methyltetrahydrofolate. Possible crucial role in the regulation of tissue concentration of AdoMet and of metabolism of methionine. The protein is Glycine N-methyltransferase (Gnmt) of Rattus norvegicus (Rat).